Consider the following 78-residue polypeptide: MARVCQVTGKGPMTGNNVSHANNKTKRRFLPNLQSRRFWVESENRWVRLRVSAKAIRIIDKNGIDAVLADLRARGELA.

Positions 1 to 21 (MARVCQVTGKGPMTGNNVSHA) are disordered.

It belongs to the bacterial ribosomal protein bL28 family.

The polypeptide is Large ribosomal subunit protein bL28 (Bordetella petrii (strain ATCC BAA-461 / DSM 12804 / CCUG 43448)).